The chain runs to 26 residues: Acyl carrier protein (26 aa).

The Carrier domain maps to 2 to 26; it reads SDTATRVQKIVVEHLGVESDKVTQE.

This sequence belongs to the acyl carrier protein (ACP) family. 4'-phosphopantetheine is transferred from CoA to a specific serine of apo-ACP by AcpS. This modification is essential for activity because fatty acids are bound in thioester linkage to the sulfhydryl of the prosthetic group.

It is found in the cytoplasm. It participates in lipid metabolism; fatty acid biosynthesis. Its function is as follows. Carrier of the growing fatty acid chain in fatty acid biosynthesis. The protein is Acyl carrier protein (acpP) of Erythrobacter longus.